Reading from the N-terminus, the 578-residue chain is Probable acyl-activating enzyme 12, peroxisomal (578 aa).

Residues 576-578 carry the Microbody targeting signal motif; sequence SRL.

Belongs to the ATP-dependent AMP-binding enzyme family. In terms of tissue distribution, expressed at low levels in leaves.

It localises to the peroxisome. May act as an acid--thiol ligase that activates carboxylic acids by forming acyl-CoAs. This is Probable acyl-activating enzyme 12, peroxisomal (AAE12) from Arabidopsis thaliana (Mouse-ear cress).